The primary structure comprises 341 residues: Phosphoribosylformylglycinamidine cyclo-ligase (341 aa).

Belongs to the AIR synthase family.

It localises to the cytoplasm. The enzyme catalyses 2-formamido-N(1)-(5-O-phospho-beta-D-ribosyl)acetamidine + ATP = 5-amino-1-(5-phospho-beta-D-ribosyl)imidazole + ADP + phosphate + H(+). The protein operates within purine metabolism; IMP biosynthesis via de novo pathway; 5-amino-1-(5-phospho-D-ribosyl)imidazole from N(2)-formyl-N(1)-(5-phospho-D-ribosyl)glycinamide: step 2/2. This Xanthomonas campestris pv. campestris (strain 8004) protein is Phosphoribosylformylglycinamidine cyclo-ligase.